The following is a 210-amino-acid chain: MIAVINYGAGNLPNAVRALEYVQAPIEVVTDPAAVRAAQAVVLPGVGATADTMRSLREMGMDSAIREVIARGTPFLGICVGMQVLAEQSEEFGLHECLGLVPGTIRRFDQGLKVPQIGWNGVQHDGSALWDGIPNGAEFYFVHSYYLATDDVALVTGRTEYGLNFPAAIARDNITAVQFHPEKSGQWGLKLLGNWVELALSRGSGVGDRA.

The Glutamine amidotransferase type-1 domain occupies Met-1–Gly-205. Cys-79 functions as the Nucleophile in the catalytic mechanism. Active-site residues include His-180 and Glu-182.

As to quaternary structure, heterodimer of HisH and HisF.

Its subcellular location is the cytoplasm. The enzyme catalyses 5-[(5-phospho-1-deoxy-D-ribulos-1-ylimino)methylamino]-1-(5-phospho-beta-D-ribosyl)imidazole-4-carboxamide + L-glutamine = D-erythro-1-(imidazol-4-yl)glycerol 3-phosphate + 5-amino-1-(5-phospho-beta-D-ribosyl)imidazole-4-carboxamide + L-glutamate + H(+). It catalyses the reaction L-glutamine + H2O = L-glutamate + NH4(+). It functions in the pathway amino-acid biosynthesis; L-histidine biosynthesis; L-histidine from 5-phospho-alpha-D-ribose 1-diphosphate: step 5/9. Functionally, IGPS catalyzes the conversion of PRFAR and glutamine to IGP, AICAR and glutamate. The HisH subunit catalyzes the hydrolysis of glutamine to glutamate and ammonia as part of the synthesis of IGP and AICAR. The resulting ammonia molecule is channeled to the active site of HisF. The chain is Imidazole glycerol phosphate synthase subunit HisH from Herpetosiphon aurantiacus (strain ATCC 23779 / DSM 785 / 114-95).